The following is a 1072-amino-acid chain: PWWP domain-containing protein 1 (1072 aa).

Positions 21-133 (DSIQDPKVTP…ADEKELDLGL (113 aa)) are disordered. A compositionally biased stretch (low complexity) spans 25-38 (DPKVTPDDTVVDSS). Over residues 66 to 77 (RVLESERSEKDG) the composition is skewed to basic and acidic residues. Over residues 96 to 128 (KDDESSEVKEEEEEEDGSDDQSSELGSEADEKE) the composition is skewed to acidic residues. In terms of domain architecture, PWWP spans 173–234 (VGDLVWGKVK…PAELIPFEPN (62 aa)). The segment at 365-387 (KSPRSSVSTLEPHNRAPPRAPLS) is disordered. Polar residues predominate over residues 366–375 (SPRSSVSTLE). Positions 402 to 409 (SKKPTKVK) match the Nuclear localization signal 1 motif. Disordered regions lie at residues 486–619 (AIPG…GEAG), 681–738 (LSVS…KTNQ), 871–931 (KAEP…NGNR), and 944–973 (ENSS…SSSV). Over residues 498 to 526 (SLDEEKGLAEKSKERMEERAAVLPEHGKS) the composition is skewed to basic and acidic residues. The segment covering 545–568 (AGSSLQPLLESHTSASEGKSSTGS) has biased composition (polar residues). Short sequence motifs (nuclear localization signal) lie at residues 596–603 (KKKKKEPD), 705–712 (VKRTEDPS), and 733–740 (LKKTNQLK). Positions 706-729 (KRTEDPSKAGKKRLSSDRQDEIPS) are enriched in basic and acidic residues. Residues 871 to 880 (KAEPREPENT) are compositionally biased toward basic and acidic residues. Positions 897-906 (LHQPTLPPPN) are enriched in pro residues. The segment covering 921-930 (SSSSNNGNGN) has biased composition (low complexity). The segment covering 947 to 966 (SKANTEPPQVTMTLNRNSGP) has biased composition (polar residues).

The protein belongs to the PDP family. As to quaternary structure, interacts with MSI4/FVE. Component of the PRC2 (polycomb repressive complex 2) complex which regulates histone methylation on histone H3K27.

It is found in the nucleus. Together with PDP2, PDP3 and PDP6, interacts with MSI4/FVE and MSI5 to suppress FLC, MAF4 and MAF5 expression by regulating the function of the PRC2 complex and modulating H3K27me3 level, thereby promoting flowering. This Arabidopsis thaliana (Mouse-ear cress) protein is PWWP domain-containing protein 1.